The following is a 381-amino-acid chain: MAPNIRKSHPLLKIVNNSLIDLPSPSNISTWWNFGSLLGICLITPILTGVMLAMHYTADTSLAFSSVAHICRDVQYGWMIRNLHANGASFFFICIYLHIGRGFYYGSYLYKETWNTGIILLLTLMATAFVGYVLPWGQMSFWGATVITNLFSAIPYIGQTLVEWAWGGFSVDNPTLTRFFALHFLLPFLIAGISIVHLTFLHETGSNNPLGIVSHCDKIPFHPYFSMKDLLGFTLLSLPFLALAFFTPNLLGDPENFTPANPLVTPPHIKPEWYFLFAYAILRSIPNKLGGVLALAASVLILFTIPLLHKSKMRSMTFRPMSQILFWLLVANLFILTWVGSQPVEHPFIIIGQLASLSYFTILLFLFPITATLENKILYQY.

4 helical membrane-spanning segments follow: residues 34–54, 78–99, 114–134, and 179–199; these read FGSL…MLAM, WMIR…YLHI, WNTG…GYVL, and FFAL…VHLT. Residues His84 and His98 each coordinate heme b. Heme b contacts are provided by His183 and His197. His202 lines the a ubiquinone pocket. The next 4 membrane-spanning stretches (helical) occupy residues 227-247, 289-309, 321-341, and 348-368; these read MKDL…AFFT, LGGV…PLLH, MSQI…WVGS, and FIII…FLFP.

It belongs to the cytochrome b family. The cytochrome bc1 complex contains 11 subunits: 3 respiratory subunits (MT-CYB, CYC1 and UQCRFS1), 2 core proteins (UQCRC1 and UQCRC2) and 6 low-molecular weight proteins (UQCRH/QCR6, UQCRB/QCR7, UQCRQ/QCR8, UQCR10/QCR9, UQCR11/QCR10 and a cleavage product of UQCRFS1). This cytochrome bc1 complex then forms a dimer. It depends on heme b as a cofactor.

The protein resides in the mitochondrion inner membrane. Functionally, component of the ubiquinol-cytochrome c reductase complex (complex III or cytochrome b-c1 complex) that is part of the mitochondrial respiratory chain. The b-c1 complex mediates electron transfer from ubiquinol to cytochrome c. Contributes to the generation of a proton gradient across the mitochondrial membrane that is then used for ATP synthesis. The sequence is that of Cytochrome b (MT-CYB) from Nothoprocta perdicaria (Chilean tinamou).